The sequence spans 364 residues: tRNA 2-selenouridine synthase (364 aa).

The region spanning 14–137 (LLADTPLIDV…LRQTAIQATW (124 aa)) is the Rhodanese domain. The S-selanylcysteine intermediate role is filled by Cys-97.

The protein belongs to the SelU family. As to quaternary structure, monomer.

It catalyses the reaction 5-methylaminomethyl-2-thiouridine(34) in tRNA + selenophosphate + (2E)-geranyl diphosphate + H2O + H(+) = 5-methylaminomethyl-2-selenouridine(34) in tRNA + (2E)-thiogeraniol + phosphate + diphosphate. The catalysed reaction is 5-methylaminomethyl-2-thiouridine(34) in tRNA + (2E)-geranyl diphosphate = 5-methylaminomethyl-S-(2E)-geranyl-thiouridine(34) in tRNA + diphosphate. It carries out the reaction 5-methylaminomethyl-S-(2E)-geranyl-thiouridine(34) in tRNA + selenophosphate + H(+) = 5-methylaminomethyl-2-(Se-phospho)selenouridine(34) in tRNA + (2E)-thiogeraniol. The enzyme catalyses 5-methylaminomethyl-2-(Se-phospho)selenouridine(34) in tRNA + H2O = 5-methylaminomethyl-2-selenouridine(34) in tRNA + phosphate. Functionally, involved in the post-transcriptional modification of the uridine at the wobble position (U34) of tRNA(Lys), tRNA(Glu) and tRNA(Gln). Catalyzes the conversion of 2-thiouridine (S2U-RNA) to 2-selenouridine (Se2U-RNA). Acts in a two-step process involving geranylation of 2-thiouridine (S2U) to S-geranyl-2-thiouridine (geS2U) and subsequent selenation of the latter derivative to 2-selenouridine (Se2U) in the tRNA chain. This chain is tRNA 2-selenouridine synthase, found in Salmonella enteritidis PT4 (strain P125109).